A 397-amino-acid polypeptide reads, in one-letter code: Pectate lyase 2 (397 aa).

The signal sequence occupies residues 1-25 (MGIKQCCYILYFTLALVALLQPVRS). N-linked (GlcNAc...) asparagine glycosylation is present at Asn37. A disulfide bond links Cys54 and Cys71. Residues Asp194, Asp218, and Asp222 each contribute to the Ca(2+) site. The active site involves Arg274.

The protein belongs to the polysaccharide lyase 1 family. Amb a subfamily. Monomer. The cofactor is Ca(2+). The N-terminus is blocked. In terms of tissue distribution, pollen and flowers.

It carries out the reaction Eliminative cleavage of (1-&gt;4)-alpha-D-galacturonan to give oligosaccharides with 4-deoxy-alpha-D-galact-4-enuronosyl groups at their non-reducing ends.. It participates in glycan metabolism; pectin degradation; 2-dehydro-3-deoxy-D-gluconate from pectin: step 2/5. Functionally, has pectate lyase activity. In Ambrosia artemisiifolia (Common ragweed), this protein is Pectate lyase 2.